Here is a 374-residue protein sequence, read N- to C-terminus: Flagellar P-ring protein (374 aa).

The N-terminal stretch at 1–29 (MRRVRTTRLFQVACAAIVALASSAMSAHA) is a signal peptide.

It belongs to the FlgI family. The basal body constitutes a major portion of the flagellar organelle and consists of four rings (L,P,S, and M) mounted on a central rod.

The protein localises to the periplasm. Its subcellular location is the bacterial flagellum basal body. Assembles around the rod to form the L-ring and probably protects the motor/basal body from shearing forces during rotation. This is Flagellar P-ring protein from Bradyrhizobium sp. (strain BTAi1 / ATCC BAA-1182).